Here is a 203-residue protein sequence, read N- to C-terminus: Mitotic spindle checkpoint component mad2 (203 aa).

The HORMA domain occupies 13–197 (KGSSKLVSEF…TSMHKIDCQV (185 aa)).

The protein belongs to the MAD2 family. Interacts with mad3 and slp1.

It localises to the nucleus. Functionally, feedback control that prevents cells with incompletely assembled spindles from leaving mitosis. It interacts with the anaphase promoting complex/cyclosome (APC/C) thereby inhibiting APC/C-dependent proteolysis, a step required for exit from mitosis. This is Mitotic spindle checkpoint component mad2 from Schizosaccharomyces pombe (strain 972 / ATCC 24843) (Fission yeast).